The chain runs to 570 residues: PTS system lactose-specific EIICB component (570 aa).

A PTS EIIC type-3 domain is found at 9 to 410; the sequence is IEKGKPFFEK…VVDIIIYYPF (402 aa). Transmembrane regions (helical) follow at residues 31–51, 65–85, 104–124, 133–153, 178–198, 223–243, 283–303, 340–360, and 382–402; these read GFIS…IAYV, AILM…VAGT, INFI…ASDP, AFMG…TVIV, FKDL…DLVI, GWIG…VGIH, MFIV…MFMW, VFFI…KLFV, and IIMG…LIVV. The 104-residue stretch at 467-570 folds into the PTS EIIB type-3 domain; it reads QTNVLVLCAG…LDFVQQQFEN (104 aa). Residue C474 is the Phosphocysteine intermediate; for EIIB activity of the active site. C474 is modified (phosphocysteine; by EIIA).

Its subcellular location is the cell membrane. It carries out the reaction lactose(out) + N(pros)-phospho-L-histidyl-[protein] = lactose 6-phosphate(in) + L-histidyl-[protein]. Its function is as follows. The phosphoenolpyruvate-dependent sugar phosphotransferase system (sugar PTS), a major carbohydrate active transport system, catalyzes the phosphorylation of incoming sugar substrates concomitantly with their translocation across the cell membrane. The enzyme II LacEF PTS system is involved in lactose transport. In Staphylococcus aureus (strain N315), this protein is PTS system lactose-specific EIICB component.